The following is a 1451-amino-acid chain: ABC transporter G family member 32 (1451 aa).

Residues 162 to 435 enclose the ABC transporter 1 domain; that stretch reads GNALHISPTR…FELMGFRCPQ (274 aa). 195–202 is a binding site for ATP; that stretch reads GPPGSGKT. The ABC transmembrane type-2 1 domain occupies 513–725; sequence ALLKANIDRE…AQNAISTNEF (213 aa). Transmembrane regions (helical) follow at residues 531–551, 563–583, 618–638, 650–670, 674–694, and 760–780; these read FVYI…MTTF, GTIY…NGFA, IPVT…VVGF, LLLV…AGIG, VVSQ…GGFI, and IGFG…TVAL. The interval 809–835 is disordered; sequence ILDSCEEKKSRKKEQSQSVNQKHWNNT. A compositionally biased stretch (basic and acidic residues) spans 813–823; sequence CEEKKSRKKEQ. Residues 853 to 1105 form the ABC transporter 2 domain; that stretch reads LSFNDIKYSV…KLIEYFEGIE (253 aa). 898–905 contributes to the ATP binding site; it reads GVSGAGKT. The 215-residue stretch at 1178–1392 folds into the ABC transmembrane type-2 2 domain; that stretch reads TQCIACLWKH…TLYGLVASQF (215 aa). Helical transmembrane passes span 1197–1217, 1237–1257, 1285–1305, 1312–1332, 1342–1362, 1373–1393, and 1423–1443; these read YTAV…TMFW, YAAV…VVVV, LPYI…MIGF, FIWY…FGMM, IAAI…GYLI, WYCW…SQFG, and LVAV…SFAI.

The protein belongs to the ABC transporter superfamily. ABCG family. PDR (TC 3.A.1.205) subfamily.

Its subcellular location is the membrane. May be a general defense protein. This Oryza sativa subsp. japonica (Rice) protein is ABC transporter G family member 32.